We begin with the raw amino-acid sequence, 102 residues long: Large ribosomal subunit protein uL24 (102 aa).

The protein belongs to the universal ribosomal protein uL24 family. Part of the 50S ribosomal subunit.

Functionally, one of two assembly initiator proteins, it binds directly to the 5'-end of the 23S rRNA, where it nucleates assembly of the 50S subunit. One of the proteins that surrounds the polypeptide exit tunnel on the outside of the subunit. This Paraburkholderia phytofirmans (strain DSM 17436 / LMG 22146 / PsJN) (Burkholderia phytofirmans) protein is Large ribosomal subunit protein uL24.